A 496-amino-acid chain; its full sequence is probable leucine aminopeptidase 2 (496 aa).

A signal peptide spans M1–G16. Residues P111 to K205 form the PA domain. N224 carries N-linked (GlcNAc...) asparagine glycosylation. Zn(2+) is bound by residues H248 and D260. The active-site Proton acceptor is E292. E293 serves as a coordination point for Zn(2+). N-linked (GlcNAc...) asparagine glycosylation is present at N307. D321 lines the Zn(2+) pocket. 2 N-linked (GlcNAc...) asparagine glycosylation sites follow: N341 and N402. H419 contacts Zn(2+). N-linked (GlcNAc...) asparagine glycans are attached at residues N424 and N458. Positions K475–A496 are disordered.

This sequence belongs to the peptidase M28 family. M28A subfamily. Monomer. Requires Zn(2+) as cofactor.

The protein localises to the secreted. Functionally, extracellular aminopeptidase that releases a wide variety of amino acids from natural peptides. This is probable leucine aminopeptidase 2 (lap2) from Aspergillus oryzae (strain ATCC 42149 / RIB 40) (Yellow koji mold).